Here is a 417-residue protein sequence, read N- to C-terminus: Gamma-glutamyl phosphate reductase (417 aa).

The protein belongs to the gamma-glutamyl phosphate reductase family.

The protein resides in the cytoplasm. The catalysed reaction is L-glutamate 5-semialdehyde + phosphate + NADP(+) = L-glutamyl 5-phosphate + NADPH + H(+). It participates in amino-acid biosynthesis; L-proline biosynthesis; L-glutamate 5-semialdehyde from L-glutamate: step 2/2. Its function is as follows. Catalyzes the NADPH-dependent reduction of L-glutamate 5-phosphate into L-glutamate 5-semialdehyde and phosphate. The product spontaneously undergoes cyclization to form 1-pyrroline-5-carboxylate. The polypeptide is Gamma-glutamyl phosphate reductase (Aeromonas salmonicida (strain A449)).